The following is a 329-amino-acid chain: DNA-directed RNA polymerase subunit alpha (329 aa).

The segment at 1-234 (MQGSVTEFLK…EQLDAFVELR (234 aa)) is alpha N-terminal domain (alpha-NTD). The segment at 248–329 (FDPILLRPVD…WPPASLIDND (82 aa)) is alpha C-terminal domain (alpha-CTD).

The protein belongs to the RNA polymerase alpha chain family. Homodimer. The RNAP catalytic core consists of 2 alpha, 1 beta, 1 beta' and 1 omega subunit. When a sigma factor is associated with the core the holoenzyme is formed, which can initiate transcription.

It carries out the reaction RNA(n) + a ribonucleoside 5'-triphosphate = RNA(n+1) + diphosphate. Its function is as follows. DNA-dependent RNA polymerase catalyzes the transcription of DNA into RNA using the four ribonucleoside triphosphates as substrates. This is DNA-directed RNA polymerase subunit alpha from Idiomarina loihiensis (strain ATCC BAA-735 / DSM 15497 / L2-TR).